We begin with the raw amino-acid sequence, 1195 residues long: ATP-dependent DNA helicase Hel308 (1195 aa).

ATP contacts are provided by residues Gln20 and Ile39–Thr46. The Helicase ATP-binding domain maps to Arg26–Asp196. The DEAH box motif lies at Asp143–His146. The DOD-type homing endonuclease domain occupies Phe451 to Ile584.

Belongs to the helicase family. Hel308 subfamily. Monomer. In terms of processing, this protein undergoes a protein self splicing that involves a post-translational excision of the intervening region (intein) followed by peptide ligation.

It catalyses the reaction Couples ATP hydrolysis with the unwinding of duplex DNA by translocating in the 3'-5' direction.. The enzyme catalyses ATP + H2O = ADP + phosphate + H(+). DNA-dependent ATPase and 3'-5' DNA helicase that may be involved in repair of stalled replication forks. This chain is ATP-dependent DNA helicase Hel308, found in Methanocaldococcus jannaschii (strain ATCC 43067 / DSM 2661 / JAL-1 / JCM 10045 / NBRC 100440) (Methanococcus jannaschii).